Consider the following 510-residue polypeptide: Zinc finger protein 692 (510 aa).

2 disordered regions span residues 1 to 20 (MAAS…RQLD) and 121 to 306 (WGPS…EDTA). Ser-161 bears the Phosphoserine mark. Residues 163–172 (CDERAQEARM) are compositionally biased toward basic and acidic residues. Residues 188–201 (EDGEEEEEDEEEML) show a composition bias toward acidic residues. Ser-225 bears the Phosphoserine mark. Residues 237–265 (APAPAAVPAPLASPSSSASSLGSGAPGPV) are compositionally biased toward low complexity. Residues 278-297 (QADQQTEPLASPGSQAQSAL) are compositionally biased toward polar residues. 5 consecutive C2H2-type zinc fingers follow at residues 322 to 347 (LPCD…KYQH), 353 to 377 (FSCP…VKLH), 383 to 405 (YICE…RRIH), 411 to 433 (LQCE…RRKH), and 442 to 465 (FPCE…SKSH). Ser-464 bears the Phosphoserine mark.

This sequence belongs to the krueppel C2H2-type zinc-finger protein family. In terms of processing, phosphorylation at Ser-464 results in loss of DNA-binding activity.

Its subcellular location is the nucleus. Its function is as follows. May act as an transcriptional repressor for PCK1 gene expression, in turn may participate in the hepatic gluconeogenesis regulation through the activated AMPK signaling pathway. The polypeptide is Zinc finger protein 692 (Bos taurus (Bovine)).